The chain runs to 359 residues: Methyltransferase fsa4 (359 aa).

Residues Gly198–Gly199, Asp224, Ser248–Phe249, Arg264, and Arg265 contribute to the S-adenosyl-L-methionine site.

Belongs to the class I-like SAM-binding methyltransferase superfamily. Cation-independent O-methyltransferase family.

Its pathway is mycotoxin biosynthesis. Its function is as follows. Methyltransferase; part of the gene cluster that mediates the biosynthesis of HIV-1 integrase inhibitor equisetin and of fusarisetin A, both trans-fused decalin-containing tetramic acids showing also antimicrobial activity. The PKS module of fsa1 together with the enoylreductase fsa3 catalyze the formation of the polyketide unit which is then conjugated to L-serine by the condensation domain of the fsa1 NRPS module. Activity of the Dieckmann cyclase domain (RED) results in release of the Dieckmann product intermediate. Diels-Alderase fsa2 is involved in endo-selective Diels-Alder cycloaddition to form the decalin ring, leading to the production of N-desmethylequisetin also called trichosetin. Subsequent N-methylation is carried out by fsa4 to give equisetin. The enzymatic gene responsible for the conversion of equisetin to fusarisetin A has not been identified yet and is probably located outside of the fsa cluster. This Fusarium sp. (strain FN080326) protein is Methyltransferase fsa4.